The following is a 237-amino-acid chain: uncharacterized protein (237 aa).

The interval 1–26 (MKRIRDVLSHENSNNTNYSDTNDTDY) is disordered. A compositionally biased stretch (low complexity) spans 12–21 (NSNNTNYSDT).

It belongs to the mimivirus R160 family.

This is an uncharacterized protein from Acanthamoeba polyphaga mimivirus (APMV).